Reading from the N-terminus, the 55-residue chain is uncharacterized protein (55 aa).

This is an uncharacterized protein from Escherichia coli (strain K12).